Reading from the N-terminus, the 444-residue chain is Prenyltransferase phnF (444 aa).

This sequence belongs to the tryptophan dimethylallyltransferase family.

It carries out the reaction 2,3,4,7,9-pentahydroxy-6-methyl-1H-phenalen-1-one + dimethylallyl diphosphate = 2,4,7,9-tetrahydroxy-6-methyl-8-(2-methylbut-3-en-2-yl)-1-oxo-1H-phenalen-3-ol + diphosphate. The protein operates within secondary metabolite biosynthesis. In terms of biological role, prenyltransferase; part of the gene cluster that mediates the biosynthesis of phenalenones such as herqueinone, compounds that have been reported to treat tumors, bacterial infections and/or mycoses, and rheumatic diseases. The non-reducing polyketide synthase phnA synthesizes the heptaketide backbone and cyclizes it into the angular, hemiketal-containing naphtho-gamma-pyrone prephenalenone. The product template (PT) domain of phnA catalyzes only the C4-C9 aldol condensation, which is unprecedented among known PT domains. The transformation of prephenalenone to phenalenones requires an FAD-dependent monooxygenase phnB, which catalyzes the C2 aromatic hydroxylation of prephenalenone and ring opening of the gamma-pyrone ring simultaneously. Subsequent intramolecular deprotonation of C3 phenolic oxygen accelerates phenalenone ring closure to yield the tricyclic phenalenone core with a C2 hydroxylation. The prenyltransferase phnF further catalyzes reverse C-prenylation of phenalenone by direct electrophilic substitution at C6, or possibly via first a forward O-prenylation of a neighboring phenol in phenalenone, followed by a Claisen rearrangement. The hydroalkoxylation enzyme phnH catalyzes the 5-exo-trig cyclization via acid catalysis after the spontaneous deprotonation of 7-OH, which leads to the formation of the dihydrobenzofuran atrovenetin. Atrovenetin is further converted to deoxyherqueinone by the O-methyltransferase phnC which can methylate C2-OH to stabilize the northern portion of the phenalenone core. Finally, the oxidoreductase phnG converts deoxyherqueinone to herqueinone via C6 hydroxylation. The chain is Prenyltransferase phnF from Penicillium herquei.